The primary structure comprises 320 residues: D-alanine--D-alanine ligase (320 aa).

The region spanning serine 120–lysine 314 is the ATP-grasp domain. Methionine 147–glutamine 198 serves as a coordination point for ATP. Mg(2+) contacts are provided by glutamate 267, glutamate 281, and asparagine 283.

Belongs to the D-alanine--D-alanine ligase family. It depends on Mg(2+) as a cofactor. The cofactor is Mn(2+).

Its subcellular location is the cytoplasm. It carries out the reaction 2 D-alanine + ATP = D-alanyl-D-alanine + ADP + phosphate + H(+). It participates in cell wall biogenesis; peptidoglycan biosynthesis. Functionally, cell wall formation. The polypeptide is D-alanine--D-alanine ligase (Rickettsia akari (strain Hartford)).